We begin with the raw amino-acid sequence, 88 residues long: Small ribosomal subunit protein bS16 (88 aa).

This sequence belongs to the bacterial ribosomal protein bS16 family.

This Geotalea daltonii (strain DSM 22248 / JCM 15807 / FRC-32) (Geobacter daltonii) protein is Small ribosomal subunit protein bS16.